A 241-amino-acid chain; its full sequence is Spiralin (241 aa).

The first 23 residues, 1–23, serve as a signal peptide directing secretion; the sequence is MKKLLSILAVFGVSAVGTTSVVA. C24 is lipidated: N-palmitoyl cysteine. C24 carries the S-diacylglycerol cysteine lipid modification.

The protein belongs to the spiralin family. Seems to occur as dimer, tetramers, and large oligomers of identical chains. In terms of processing, palmitate and stearate are the major lipid components.

It is found in the cell membrane. Functionally, major membrane protein of spiroplasma. The sequence is that of Spiralin (spi) from Spiroplasma citri.